The following is a 402-amino-acid chain: Tryptophan--tRNA ligase, cytoplasmic (402 aa).

Positions 97-106 match the 'HIGH' region motif; sequence PSSEALHLGH. A 'KMSKS' region motif is present at residues 280 to 284; the sequence is KMSAS.

The protein belongs to the class-I aminoacyl-tRNA synthetase family.

The protein resides in the cytoplasm. The protein localises to the cytosol. It carries out the reaction tRNA(Trp) + L-tryptophan + ATP = L-tryptophyl-tRNA(Trp) + AMP + diphosphate + H(+). The polypeptide is Tryptophan--tRNA ligase, cytoplasmic (Arabidopsis thaliana (Mouse-ear cress)).